The following is a 137-amino-acid chain: Phosphoribosyl-AMP cyclohydrolase (137 aa).

Mg(2+) is bound at residue D84. Residue C85 coordinates Zn(2+). Residues D86 and D88 each contribute to the Mg(2+) site. Residues C101 and C108 each contribute to the Zn(2+) site.

The protein belongs to the PRA-CH family. In terms of assembly, homodimer. It depends on Mg(2+) as a cofactor. The cofactor is Zn(2+).

It localises to the cytoplasm. The catalysed reaction is 1-(5-phospho-beta-D-ribosyl)-5'-AMP + H2O = 1-(5-phospho-beta-D-ribosyl)-5-[(5-phospho-beta-D-ribosylamino)methylideneamino]imidazole-4-carboxamide. It functions in the pathway amino-acid biosynthesis; L-histidine biosynthesis; L-histidine from 5-phospho-alpha-D-ribose 1-diphosphate: step 3/9. In terms of biological role, catalyzes the hydrolysis of the adenine ring of phosphoribosyl-AMP. The sequence is that of Phosphoribosyl-AMP cyclohydrolase from Chlorobaculum tepidum (strain ATCC 49652 / DSM 12025 / NBRC 103806 / TLS) (Chlorobium tepidum).